The following is a 192-amino-acid chain: Imidazoleglycerol-phosphate dehydratase (192 aa).

It belongs to the imidazoleglycerol-phosphate dehydratase family.

It is found in the cytoplasm. It catalyses the reaction D-erythro-1-(imidazol-4-yl)glycerol 3-phosphate = 3-(imidazol-4-yl)-2-oxopropyl phosphate + H2O. It functions in the pathway amino-acid biosynthesis; L-histidine biosynthesis; L-histidine from 5-phospho-alpha-D-ribose 1-diphosphate: step 6/9. The protein is Imidazoleglycerol-phosphate dehydratase of Carboxydothermus hydrogenoformans (strain ATCC BAA-161 / DSM 6008 / Z-2901).